Here is a 219-residue protein sequence, read N- to C-terminus: Ribosome maturation factor RimP (219 aa).

Residues 195-219 (EGRIPGDDLGAEPEDVASTETQEKK) form a disordered region.

This sequence belongs to the RimP family.

It localises to the cytoplasm. Its function is as follows. Required for maturation of 30S ribosomal subunits. In Brucella abortus (strain S19), this protein is Ribosome maturation factor RimP.